The following is a 473-amino-acid chain: Ribulose bisphosphate carboxylase large chain (473 aa).

Residues Asn116 and Thr166 each contribute to the substrate site. Lys168 serves as the catalytic Proton acceptor. Lys170 contributes to the substrate binding site. Mg(2+) contacts are provided by Lys194, Asp196, and Glu197. Lys194 is subject to N6-carboxylysine. His287 (proton acceptor) is an active-site residue. 3 residues coordinate substrate: Arg288, His320, and Ser372.

This sequence belongs to the RuBisCO large chain family. Type I subfamily. As to quaternary structure, heterohexadecamer of 8 large chains and 8 small chains. It depends on Mg(2+) as a cofactor.

The enzyme catalyses 2 (2R)-3-phosphoglycerate + 2 H(+) = D-ribulose 1,5-bisphosphate + CO2 + H2O. The catalysed reaction is D-ribulose 1,5-bisphosphate + O2 = 2-phosphoglycolate + (2R)-3-phosphoglycerate + 2 H(+). Functionally, ruBisCO catalyzes two reactions: the carboxylation of D-ribulose 1,5-bisphosphate, the primary event in carbon dioxide fixation, as well as the oxidative fragmentation of the pentose substrate. Both reactions occur simultaneously and in competition at the same active site. This is Ribulose bisphosphate carboxylase large chain from Nitrosospira sp. (strain TCH716).